The chain runs to 402 residues: Rubredoxin-oxygen oxidoreductase (402 aa).

The segment at 30-216 (PMGTTYNAYL…KAIETLVGAG (187 aa)) is zinc metallo-hydrolase. 6 residues coordinate Fe cation: His79, Glu81, Asp83, His146, Asp165, and His226. In terms of domain architecture, Flavodoxin-like spans 255–393 (VVIFYDSMWH…QLKTMAQTIA (139 aa)).

It in the N-terminal section; belongs to the zinc metallo-hydrolase group 3 family. In terms of assembly, homodimer. The cofactor is FMN. Requires Fe cation as cofactor.

Its pathway is energy metabolism; electron transfer. Functionally, catalyzes the four-electron reduction of one oxygen molecule to two water molecules. The protein is Rubredoxin-oxygen oxidoreductase (roo) of Megalodesulfovibrio gigas (strain ATCC 19364 / DSM 1382 / NCIMB 9332 / VKM B-1759) (Desulfovibrio gigas).